Here is a 285-residue protein sequence, read N- to C-terminus: Acetylglutamate kinase (285 aa).

Substrate-binding positions include 64–65, Arg-86, and Asn-181; that span reads GG.

The protein belongs to the acetylglutamate kinase family. ArgB subfamily.

It localises to the cytoplasm. The catalysed reaction is N-acetyl-L-glutamate + ATP = N-acetyl-L-glutamyl 5-phosphate + ADP. It participates in amino-acid biosynthesis; L-arginine biosynthesis; N(2)-acetyl-L-ornithine from L-glutamate: step 2/4. Catalyzes the ATP-dependent phosphorylation of N-acetyl-L-glutamate. This chain is Acetylglutamate kinase, found in Clostridium beijerinckii (strain ATCC 51743 / NCIMB 8052) (Clostridium acetobutylicum).